A 440-amino-acid polypeptide reads, in one-letter code: 23S rRNA (uracil(1939)-C(5))-methyltransferase RlmD (440 aa).

The TRAM domain occupies 6 to 64 (PIHNAQPEQVFIESLDTEGRGIARVEGKVLFVDGALPGERVWARRTQNHKSFDRAELLQ). [4Fe-4S] cluster-binding residues include cysteine 77, cysteine 83, cysteine 86, and cysteine 164. The S-adenosyl-L-methionine site is built by glutamine 273, phenylalanine 302, asparagine 307, glutamate 323, aspartate 351, and aspartate 372. Cysteine 397 acts as the Nucleophile in catalysis.

It belongs to the class I-like SAM-binding methyltransferase superfamily. RNA M5U methyltransferase family. RlmD subfamily.

The enzyme catalyses uridine(1939) in 23S rRNA + S-adenosyl-L-methionine = 5-methyluridine(1939) in 23S rRNA + S-adenosyl-L-homocysteine + H(+). Its function is as follows. Catalyzes the formation of 5-methyl-uridine at position 1939 (m5U1939) in 23S rRNA. This chain is 23S rRNA (uracil(1939)-C(5))-methyltransferase RlmD, found in Acidithiobacillus ferrooxidans (strain ATCC 23270 / DSM 14882 / CIP 104768 / NCIMB 8455) (Ferrobacillus ferrooxidans (strain ATCC 23270)).